The primary structure comprises 277 residues: 4-hydroxy-tetrahydrodipicolinate reductase (277 aa).

An NAD(+)-binding site is contributed by glycine 9–methionine 14. Lysine 37 is a binding site for NADP(+). Residue glycine 75–serine 77 participates in NAD(+) binding. Residue histidine 132 is the Proton donor/acceptor of the active site. The active-site Proton donor is the lysine 136. A (S)-2,3,4,5-tetrahydrodipicolinate-binding site is contributed by glycine 142–threonine 143. The tract at residues serine 245–alanine 277 is disordered.

It belongs to the DapB family.

The protein resides in the cytoplasm. The enzyme catalyses (S)-2,3,4,5-tetrahydrodipicolinate + NAD(+) + H2O = (2S,4S)-4-hydroxy-2,3,4,5-tetrahydrodipicolinate + NADH + H(+). The catalysed reaction is (S)-2,3,4,5-tetrahydrodipicolinate + NADP(+) + H2O = (2S,4S)-4-hydroxy-2,3,4,5-tetrahydrodipicolinate + NADPH + H(+). Its pathway is amino-acid biosynthesis; L-lysine biosynthesis via DAP pathway; (S)-tetrahydrodipicolinate from L-aspartate: step 4/4. Functionally, catalyzes the conversion of 4-hydroxy-tetrahydrodipicolinate (HTPA) to tetrahydrodipicolinate. This chain is 4-hydroxy-tetrahydrodipicolinate reductase, found in Clavibacter sepedonicus (Clavibacter michiganensis subsp. sepedonicus).